We begin with the raw amino-acid sequence, 337 residues long: Large ribosomal subunit protein uL3 (337 aa).

The disordered stretch occupies residues 1–29 (MARHHQPRKGSVAFSPRKRAARETPRVKS).

The protein belongs to the universal ribosomal protein uL3 family. In terms of assembly, part of the 50S ribosomal subunit. Forms a cluster with proteins L14 and L24e.

Its function is as follows. One of the primary rRNA binding proteins, it binds directly near the 3'-end of the 23S rRNA, where it nucleates assembly of the 50S subunit. This is Large ribosomal subunit protein uL3 from Methanothermobacter thermautotrophicus (strain ATCC 29096 / DSM 1053 / JCM 10044 / NBRC 100330 / Delta H) (Methanobacterium thermoautotrophicum).